A 294-amino-acid polypeptide reads, in one-letter code: Protein C3orf33 homolog (294 aa).

An N-acetylalanine modification is found at Ala-2. Residues 36–53 (LVQNISTGMAIAGIMLLI) form a helical membrane-spanning segment. Residues 244 to 271 (KPAGADLGSTKDSYHDSRRRASGKGKDS) form a disordered region.

The protein localises to the membrane. Functionally, may play a role in transcription regulation. The chain is Protein C3orf33 homolog from Mus musculus (Mouse).